The following is a 380-amino-acid chain: Tubulin-like protein CetZ (380 aa).

GTP is bound by residues 10-14 (QCGTK), 103-105 (GTG), glutamate 136, asparagine 163, and asparagine 181. Residues 359–380 (PSLEATGSDDPEGFAEYREVSR) are disordered.

The protein belongs to the CetZ family.

It localises to the cytoplasm. Its function is as follows. Involved in cell shape control. The chain is Tubulin-like protein CetZ from Thermococcus kodakarensis (strain ATCC BAA-918 / JCM 12380 / KOD1) (Pyrococcus kodakaraensis (strain KOD1)).